The chain runs to 276 residues: Mediator of RNA polymerase II transcription subunit 7 (276 aa).

Basic and acidic residues-rich tracts occupy residues 1–11 and 234–263; these read MADADAQRQAE and FGREIPSEKAEDRTEEAAVTSEEERKRDAQ. Disordered stretches follow at residues 1–27 and 234–276; these read MADADAQRQAEEDANLQLPPYPHPPPF and FGRE…MLSQ.

It belongs to the Mediator complex subunit 7 family. In terms of assembly, component of the Mediator complex.

The protein resides in the nucleus. Functionally, component of the Mediator complex, a coactivator involved in the regulated transcription of nearly all RNA polymerase II-dependent genes. Mediator functions as a bridge to convey information from gene-specific regulatory proteins to the basal RNA polymerase II transcription machinery. Mediator is recruited to promoters by direct interactions with regulatory proteins and serves as a scaffold for the assembly of a functional preinitiation complex with RNA polymerase II and the general transcription factors. The polypeptide is Mediator of RNA polymerase II transcription subunit 7 (MED7) (Phaeosphaeria nodorum (strain SN15 / ATCC MYA-4574 / FGSC 10173) (Glume blotch fungus)).